Here is a 254-residue protein sequence, read N- to C-terminus: 3-oxo-5-alpha-steroid 4-dehydrogenase 2 (254 aa).

A run of 4 helical transmembrane segments spans residues 8 to 28, 72 to 92, 146 to 166, and 206 to 226; these read SPVLAGSATLVALGALALYVA, PLSLFGPPGTVLLGLFCLHYF, FSLGVFLFILGMGINIHSDYI, and LATWSLPALAFAFFSLCFLGL.

The protein belongs to the steroid 5-alpha reductase family. In terms of tissue distribution, expressed in high levels in the prostate and many other androgen-sensitive tissues.

The protein localises to the microsome membrane. It localises to the endoplasmic reticulum membrane. It catalyses the reaction a 3-oxo-5alpha-steroid + NADP(+) = a 3-oxo-Delta(4)-steroid + NADPH + H(+). The enzyme catalyses 17beta-hydroxy-5alpha-androstan-3-one + NADP(+) = testosterone + NADPH + H(+). The catalysed reaction is 5alpha-pregnane-3,20-dione + NADP(+) = progesterone + NADPH + H(+). In terms of biological role, converts testosterone (T) into 5-alpha-dihydrotestosterone (DHT) and progesterone or corticosterone into their corresponding 5-alpha-3-oxosteroids. It plays a central role in sexual differentiation and androgen physiology. This Homo sapiens (Human) protein is 3-oxo-5-alpha-steroid 4-dehydrogenase 2 (SRD5A2).